The following is a 478-amino-acid chain: Patatin-like phospholipase domain-containing protein 2 (478 aa).

Residues 1–8 (MFPRETKW) lie on the Cytoplasmic side of the membrane. A helical membrane pass occupies residues 9–29 (NISFAGCGFLGVYHIGVASCL). The 170-residue stretch at 10 to 179 (ISFAGCGFLG…SDNLPLYELK (170 aa)) folds into the PNPLA domain. A GXGXXG motif is present at residues 14 to 19 (GCGFLG). The Extracellular segment spans residues 30-42 (REHAPFLVANATH). Asn39 carries an N-linked (GlcNAc...) asparagine glycan. Residues 43–63 (IYGASAGALTATALVTGACLG) form a helical membrane-spanning segment. Residues 45–49 (GASAG) carry the GXSXG motif. Catalysis depends on Ser47, which acts as the Nucleophile. At 64–137 (EAGANIIEVS…IISHFSSKDE (74 aa)) the chain is on the cytoplasmic side. Residue Lys92 forms a Glycyl lysine isopeptide (Lys-Gly) (interchain with G-Cter in ubiquitin) linkage. The chain crosses the membrane as a helical span at residues 138–158 (LIQANVCSTFIPVYCGLIPPT). Residues 159–323 (LQGVRYVDGG…TTLSNMLPVR (165 aa)) are Extracellular-facing. Asp166 functions as the Proton acceptor in the catalytic mechanism. Positions 166–168 (DGG) match the DGA/G motif. The helical transmembrane segment at 324-344 (LATAMMVPYTLPLESAVSFTI) threads the bilayer. At 345 to 478 (RLLEWLPDVP…PQDPSGLPPC (134 aa)) the chain is on the cytoplasmic side. Ser366 is modified (phosphoserine; in vitro). Residue Ser388 is modified to Phosphoserine; by PKA. Ser398 and Ser422 each carry phosphoserine. The segment at 456–478 (RAPASPTATDPATPQDPSGLPPC) is disordered. The segment covering 457–478 (APASPTATDPATPQDPSGLPPC) has biased composition (low complexity). Ser460 carries the post-translational modification Phosphoserine; in vitro.

In terms of assembly, interacts with ABHD5; this association stimulates PNPLA2 triglyceride hydrolase activity. Interacts with SERPINF1; this interaction stimulates the phospholipase A2 activity of PNPLA2. Despite a colocalization in lipid droplets, it probably does not interact with PLIN. Interacts with PLIN5; prevents interaction with ABHD5. Interacts with FAF2. In terms of processing, phosphorylation at Ser-398 by PKA is increased during fasting and moderate intensity exercise, and moderately increases lipolytic activity. Ubiquitinated by PEX2 in response to reactive oxygen species (ROS), leading to its degradation. Ubiquitination is stimulated by LDAH.

The protein resides in the lipid droplet. The protein localises to the cell membrane. It localises to the cytoplasm. It catalyses the reaction a triacylglycerol + H2O = a diacylglycerol + a fatty acid + H(+). It carries out the reaction a triacylglycerol + H2O = a 1,2-diacylglycerol + a fatty acid + H(+). The enzyme catalyses a triacylglycerol + H2O = a 1,3-diacylglycerol + a fatty acid + H(+). The catalysed reaction is a triacyl-sn-glycerol + H2O = a 1,3-diacyl-sn-glycerol + a fatty acid + H(+). It catalyses the reaction a triacyl-sn-glycerol + H2O = a 2,3-diacyl-sn-glycerol + a fatty acid + H(+). It carries out the reaction a 1-acylglycerol + a 1,3-diacylglycerol = a triacylglycerol + glycerol. The enzyme catalyses a 1-acylglycerol + a 1,2-diacylglycerol = a triacylglycerol + glycerol. The catalysed reaction is 2 a 1-acylglycerol = a 1,2-diacylglycerol + glycerol. It catalyses the reaction a triacylglycerol + all-trans-retinol = an all-trans-retinyl ester + a diacylglycerol. It carries out the reaction 1,2-di-(9Z-octadecenoyl)-glycerol + (9Z)-octadecenoate + H(+) = 1,2,3-tri-(9Z-octadecenoyl)-glycerol + H2O. The enzyme catalyses 1,2,3-tri-(9Z-octadecenoyl)-glycerol + H2O = 1,3-di-(9Z-octadecenoyl)-glycerol + (9Z)-octadecenoate + H(+). The catalysed reaction is 1-(9Z-octadecenoyl)-glycerol + 1,3-di-(9Z-octadecenoyl)-glycerol = 1,2,3-tri-(9Z-octadecenoyl)-glycerol + glycerol. It catalyses the reaction 1-(9Z-octadecenoyl)-glycerol + 1,2-di-(9Z-octadecenoyl)-glycerol = 1,2,3-tri-(9Z-octadecenoyl)-glycerol + glycerol. It carries out the reaction 2 1-(9Z-octadecenoyl)-glycerol = 1,2-di-(9Z-octadecenoyl)-glycerol + glycerol. The enzyme catalyses 1,2,3-tri-(9Z-octadecenoyl)-glycerol + all-trans-retinol = all-trans-retinyl 9Z-octadecenoate + di-(9Z)-octadecenoylglycerol. The catalysed reaction is 1,2,3-tri-(9Z)-hexadecenoylglycerol + H2O = 1,3-di-(9Z)-hexadecenoylglycerol + (9Z)-hexadecenoate + H(+). It catalyses the reaction 1,2,3-tri-(9Z,12Z)-octadecadienoylglycerol + H2O = 1,3-di-(9Z,12Z)-octadecadienoylglycerol + (9Z,12Z)-octadecadienoate + H(+). It carries out the reaction 1,2,3-tri-(9Z,12Z,15Z)-octadecatrienoylglycerol + H2O = 1,3-di-(9Z,12Z,15Z)-octadecatrienoylglycerol + (9Z,12Z,15Z)-octadecatrienoate + H(+). The enzyme catalyses 1,3-di-(9Z)-octadecenoyl-2-hexadecanoylglycerol + H2O = 1,3-di-(9Z-octadecenoyl)-glycerol + hexadecanoate + H(+). The catalysed reaction is 1,2-di-(9Z)-octadecenoyl-3-hexadecanoyl-sn-glycerol + H2O = 1-(9Z)-octadecenoyl-3-hexadecanoyl-sn-glycerol + (9Z)-octadecenoate + H(+). It catalyses the reaction 1-hexadecanoyl-2,3-di-(9Z)-octadecenoyl-sn-glycerol + H2O = 1-hexadecanoyl-3-(9Z)-octadecenoyl-sn-glycerol + (9Z)-octadecenoate + H(+). It carries out the reaction 1,2,3-tri-(9Z-octadecenoyl)-glycerol + H2O = 2,3-di-(9Z)-octadecenoyl-sn-glycerol + (9Z)-octadecenoate + H(+). The enzyme catalyses 1,2,3-tri-(9Z)-hexadecenoylglycerol + H2O = 2,3-di-(9Z)-hexadecenoyl-sn-glycerol + (9Z)-hexadecenoate + H(+). The catalysed reaction is 1,2,3-tri-(9Z,12Z)-octadecadienoylglycerol + H2O = 2,3-di-(9Z,12Z)-octadecadienoyl-sn-glycerol + (9Z,12Z)-octadecadienoate + H(+). It catalyses the reaction 1,2,3-tri-(9Z,12Z,15Z)-octadecatrienoylglycerol + H2O = 2,3-di-(9Z,12Z,15Z)-octadecatrienoyl-sn-glycerol + (9Z,12Z,15Z)-octadecatrienoate + H(+). It carries out the reaction 1,3-di-(9Z)-octadecenoyl-2-hexadecanoylglycerol + H2O = 2-hexadecanoyl-3-(9Z)-octadecenoyl-sn-glycerol + (9Z)-octadecenoate + H(+). The enzyme catalyses 1-hexadecanoyl-2,3-di-(9Z)-octadecenoyl-sn-glycerol + H2O = 2,3-di-(9Z)-octadecenoyl-sn-glycerol + hexadecanoate + H(+). The catalysed reaction is 1,2-di-(9Z)-octadecenoyl-3-hexadecanoyl-sn-glycerol + H2O = 2-(9Z-octadecenoyl)-3-hexadecanoyl-sn-glycerol + (9Z)-octadecenoate + H(+). It catalyses the reaction a 1,2-diacyl-sn-glycero-3-phosphocholine + H2O = a 1-acyl-sn-glycero-3-phosphocholine + a fatty acid + H(+). It carries out the reaction 1,2,3-tri-(9Z-octadecenoyl)-glycerol + 9-hydroxy-octadecanoate = 9-(9Z-octadecenoyloxy)-octadecanoate + 2,3-di-(9Z)-octadecenoyl-sn-glycerol. The enzyme catalyses 1-hexadecanoyl-2,3-di-(9Z)-octadecenoyl-sn-glycerol + 9-hydroxy-octadecanoate = 9-hexadecanoyloxy-octadecanoate + 2,3-di-(9Z)-octadecenoyl-sn-glycerol. The catalysed reaction is 1,2,3-tri-(10Z)-heptadecenoylglycerol + 9-hydroxy-octadecanoate = 2,3-di-(10Z-heptadecenoyl)-sn-glycerol + 9-(10Z-heptadecenoyloxy)-octadecanoate. It catalyses the reaction 1,2,3-tri-(9Z,12Z)-octadecadienoylglycerol + 9-hydroxy-octadecanoate = 2,3-di-(9Z,12Z)-octadecadienoyl-sn-glycerol + 9-(9Z,12Z-octadecadienoyloxy)-octadecanoate. It carries out the reaction 1,2,3-tri-(9Z)-hexadecenoylglycerol + 9-hydroxy-octadecanoate = 2,3-di-(9Z)-hexadecenoyl-sn-glycerol + 9-(9Z-hexadecenoyloxy)-octadecanoate. The enzyme catalyses 9-hydroxy-octadecanoate + 1,2-di-(9Z-octadecenoyl)-sn-glycerol = 9-(9Z-octadecenoyloxy)-octadecanoate + 2-(9Z-octadecenoyl)-glycerol. The catalysed reaction is 1-hexadecanoyl-2,3-di-(9Z)-octadecenoyl-sn-glycerol + 9-hydroxy-octadecanoate = 1-hexadecanoyl-3-(9Z)-octadecenoyl-sn-glycerol + 9-(9Z-octadecenoyloxy)-octadecanoate. The protein operates within glycerolipid metabolism; triacylglycerol degradation. Functionally, catalyzes the initial step in triglyceride hydrolysis in adipocyte and non-adipocyte lipid droplets. Exhibits a strong preference for the hydrolysis of long-chain fatty acid esters at the sn-2 position of the glycerol backbone and acts coordinately with LIPE/HLS and DGAT2 within the lipolytic cascade. Also possesses acylglycerol transacylase and phospholipase A2 activities. Transfers fatty acid from triglyceride to retinol, hydrolyzes retinylesters, and generates 1,3-diacylglycerol from triglycerides. Regulates adiposome size and may be involved in the degradation of adiposomes. Catalyzes the formation of an ester bond between hydroxy fatty acids and fatty acids derived from triglycerides or diglycerides to generate fatty acid esters of hydroxy fatty acids (FAHFAs) in adipocytes. Acts antagonistically with LDAH in regulation of cellular lipid stores. Inhibits LDAH-stimulated lipid droplet fusion. May play an important role in energy homeostasis. May play a role in the response of the organism to starvation, enhancing hydrolysis of triglycerides and providing free fatty acids to other tissues to be oxidized in situations of energy depletion. This is Patatin-like phospholipase domain-containing protein 2 from Rattus norvegicus (Rat).